A 342-amino-acid polypeptide reads, in one-letter code: Outer membrane porin C (342 aa).

Belongs to the Gram-negative porin family. Homotrimer.

The protein localises to the cell outer membrane. In terms of biological role, forms pores that allow passive diffusion of small molecules across the outer membrane. In R.aquatilis OmpC is involved in the adhesion to wheat roots. This is Outer membrane porin C (ompC) from Rahnella aquatilis.